Reading from the N-terminus, the 128-residue chain is UPF0102 protein PSPTO_4420 (128 aa).

It belongs to the UPF0102 family.

In Pseudomonas syringae pv. tomato (strain ATCC BAA-871 / DC3000), this protein is UPF0102 protein PSPTO_4420.